The sequence spans 208 residues: Outer-membrane lipoprotein LolB (208 aa).

Residues 1–17 (MIRRLLGVALLTGAITG) form the signal peptide. A lipid anchor (N-palmitoyl cysteine) is attached at cysteine 18. Cysteine 18 carries S-diacylglycerol cysteine lipidation.

This sequence belongs to the LolB family. Monomer.

The protein localises to the cell outer membrane. Functionally, plays a critical role in the incorporation of lipoproteins in the outer membrane after they are released by the LolA protein. The chain is Outer-membrane lipoprotein LolB from Marinobacter nauticus (strain ATCC 700491 / DSM 11845 / VT8) (Marinobacter aquaeolei).